A 156-amino-acid polypeptide reads, in one-letter code: ATP synthase subunit b (156 aa).

The chain crosses the membrane as a helical span at residues 12–32 (VAFFIFVLFCMKFVWPPVIAA).

It belongs to the ATPase B chain family. In terms of assembly, F-type ATPases have 2 components, F(1) - the catalytic core - and F(0) - the membrane proton channel. F(1) has five subunits: alpha(3), beta(3), gamma(1), delta(1), epsilon(1). F(0) has three main subunits: a(1), b(2) and c(10-14). The alpha and beta chains form an alternating ring which encloses part of the gamma chain. F(1) is attached to F(0) by a central stalk formed by the gamma and epsilon chains, while a peripheral stalk is formed by the delta and b chains.

Its subcellular location is the cell inner membrane. Functionally, f(1)F(0) ATP synthase produces ATP from ADP in the presence of a proton or sodium gradient. F-type ATPases consist of two structural domains, F(1) containing the extramembraneous catalytic core and F(0) containing the membrane proton channel, linked together by a central stalk and a peripheral stalk. During catalysis, ATP synthesis in the catalytic domain of F(1) is coupled via a rotary mechanism of the central stalk subunits to proton translocation. In terms of biological role, component of the F(0) channel, it forms part of the peripheral stalk, linking F(1) to F(0). This Pseudomonas paraeruginosa (strain DSM 24068 / PA7) (Pseudomonas aeruginosa (strain PA7)) protein is ATP synthase subunit b.